The chain runs to 277 residues: Alpha carbonic anhydrase 3 (277 aa).

The first 19 residues, 1-19 (MKTIILFVTFLALSSSSLA), serve as a signal peptide directing secretion. An Alpha-carbonic anhydrase domain is found at 24–259 (TEFHYKPGEI…LNGRLVYLNE (236 aa)). The cysteines at positions 49 and 209 are disulfide-linked. Asparagine 70 and asparagine 107 each carry an N-linked (GlcNAc...) asparagine glycan. Zn(2+) contacts are provided by histidine 117, histidine 119, and histidine 136. 205 to 206 (TT) is a binding site for substrate. The disordered stretch occupies residues 257–277 (LNEQSSPSPTPRLRIPRVGPV).

It belongs to the alpha-class carbonic anhydrase family. Zn(2+) is required as a cofactor. Post-translationally, N-glycosylated. As to expression, expressed in flowers and siliques.

The protein resides in the plastid. Its subcellular location is the chloroplast stroma. The enzyme catalyses hydrogencarbonate + H(+) = CO2 + H2O. In terms of biological role, reversible hydration of carbon dioxide. This Arabidopsis thaliana (Mouse-ear cress) protein is Alpha carbonic anhydrase 3 (ACA3).